The following is a 455-amino-acid chain: Venom prothrombin activator nigrarin-D (455 aa).

A signal peptide spans 1-20; that stretch reads MAPPLLLCLILTFLWNLPEA. A propeptide spanning residues 21-40 is cleaved from the precursor; that stretch reads ESNVFLKSKVANRFLQRTKR. Residues 41-86 enclose the Gla domain; that stretch reads SNSIFEEFKAGNIERECIEEKCSKEEAREVFEDNEKTETFWNVYVD. 4-carboxyglutamate occurs at positions 46, 47, 54, 56, 59, 60, 65, 66, 69, 72, and 75. A disulfide bridge links Cys57 with Cys62. The region spanning 86–122 is the EGF-like 1; calcium-binding domain; it reads DGDQCSSNPCHYRGTCKDGIGSYTCTCLPNYEGKNCE. 11 disulfide bridges follow: Cys90–Cys101, Cys95–Cys110, Cys112–Cys121, Cys129–Cys140, Cys136–Cys149, Cys151–Cys164, Cys172–Cys328, Cys216–Cys221, Cys236–Cys252, Cys376–Cys390, and Cys401–Cys429. O-linked (Hex...) serine glycosylation occurs at Ser92. Residues 129 to 164 enclose the EGF-like 2 domain; sequence CRVFNGNCWHFCKSVQNEIQCSCAESYRLGDDGHSC. The propeptide at 182–209 is activation peptide; it reads REASLPDFVQSQKAILLKKSDNPSPDIR. The Peptidase S1 domain maps to 210–453; that stretch reads IINGMDCKLG…FIPWIKAIMS (244 aa). The active-site Charge relay system is His251. N-linked (GlcNAc...) asparagine glycosylation is present at Asn254. Asp308 acts as the Charge relay system in catalysis. Ser405 serves as the catalytic Charge relay system.

It belongs to the peptidase S1 family. Snake venom subfamily. Heterodimer of a light chain and a heavy chain; disulfide-linked. The vitamin K-dependent, enzymatic carboxylation of some glutamate residues allows the modified protein to bind calcium. Expressed by the venom gland.

It is found in the secreted. The enzyme catalyses Selective cleavage of Arg-|-Thr and then Arg-|-Ile bonds in prothrombin to form thrombin.. Its function is as follows. Snake prothrombin activator that attacks the hemostatic system of prey. This protein is functionally similar to blood coagulation factor Xa. The protein is Venom prothrombin activator nigrarin-D of Cryptophis nigrescens (Eastern small-eyed snake).